The sequence spans 109 residues: Small ribosomal subunit protein bS6 (109 aa).

Belongs to the bacterial ribosomal protein bS6 family.

Binds together with bS18 to 16S ribosomal RNA. The polypeptide is Small ribosomal subunit protein bS6 (Anaplasma phagocytophilum (strain HZ)).